The chain runs to 164 residues: Nitric oxide synthase, inducible (164 aa).

F3 contacts (6R)-L-erythro-5,6,7,8-tetrahydrobiopterin. Y18 is a heme b binding site. The tract at residues 42–62 is calmodulin-binding; it reads FKGLIRAVLFSQTLIKSALAK. The Flavodoxin-like domain maps to 66 to 164; it reads CTVLYATETG…SRMYPHFCAF (99 aa). Residues T72, E73, T74, K76, S77, S118, T119, S155, and C162 each contribute to the FMN site.

Belongs to the NOS family. Homodimer. The cofactor is heme b. FAD is required as a cofactor. It depends on FMN as a cofactor. (6R)-L-erythro-5,6,7,8-tetrahydrobiopterin serves as cofactor.

The protein resides in the cytoplasm. It localises to the cytosol. The enzyme catalyses 2 L-arginine + 3 NADPH + 4 O2 + H(+) = 2 L-citrulline + 2 nitric oxide + 3 NADP(+) + 4 H2O. Not stimulated by calcium/calmodulin. In terms of biological role, produces nitric oxide (NO) which is a messenger molecule with diverse functions throughout the body. In macrophages, NO mediates tumoricidal and bactericidal actions. Also has nitrosylase activity and mediates cysteine S-nitrosylation of cytoplasmic target proteins such COX2. The protein is Nitric oxide synthase, inducible (nos2) of Carassius auratus (Goldfish).